Here is a 104-residue protein sequence, read N- to C-terminus: Alpha-amylase inhibitor HOE-467A (104 aa).

A signal peptide spans Met-1–Ala-30. 2 disulfide bridges follow: Cys-41/Cys-57 and Cys-75/Cys-103.

Inhibits mammalian alpha-amylases specifically but has no action on plant and microbial alpha-amylases. Forms a tight stoichiometric 1:1 complex with alpha-amylase. In Streptomyces tendae, this protein is Alpha-amylase inhibitor HOE-467A.